The chain runs to 124 residues: UPF0738 protein GWCH70_0774 (124 aa).

The protein belongs to the UPF0738 family.

The polypeptide is UPF0738 protein GWCH70_0774 (Geobacillus sp. (strain WCH70)).